Reading from the N-terminus, the 620-residue chain is Glutathione-regulated potassium-efflux system protein KefC (620 aa).

12 helical membrane passes run 4–24, 26–46, 54–74, 90–110, 114–134, 149–169, 178–198, 218–238, 270–290, 294–314, 327–347, and 359–379; these read HTLL…PIAV, LGLG…PWGL, SILH…GLEL, GALQ…FLGL, VAEL…MQAM, FAVL…IPLL, LGAF…VVLL, VFSA…EEVG, GLLL…GTLV, LRIL…LWLV, WFAV…GAAQ, and ALTL…VLLT. Positions 399–518 constitute an RCK N-terminal domain; the sequence is QPRVIVAGFG…AGVAMPERET (120 aa). The disordered stretch occupies residues 599–620; it reads QGTAEGKHSGEVADEPEVKPSI.

It belongs to the monovalent cation:proton antiporter 2 (CPA2) transporter (TC 2.A.37) family. KefC subfamily. As to quaternary structure, homodimer. Interacts with the regulatory subunit KefF.

It localises to the cell inner membrane. Functionally, pore-forming subunit of a potassium efflux system that confers protection against electrophiles. Catalyzes K(+)/H(+) antiport. The sequence is that of Glutathione-regulated potassium-efflux system protein KefC from Salmonella agona (strain SL483).